The chain runs to 205 residues: Probable GTP-binding protein EngB (205 aa).

The region spanning 25–199 is the EngB-type G domain; it reads NGIEIAFIGY…KLSLNSSYKK (175 aa). Residues 33-40, 60-64, 78-81, 145-148, and 178-180 each bind GTP; these read GYSNTGKS, GRTQL, DLPG, TKCD, and FSS. Residues Ser40 and Thr62 each contribute to the Mg(2+) site.

It belongs to the TRAFAC class TrmE-Era-EngA-EngB-Septin-like GTPase superfamily. EngB GTPase family. It depends on Mg(2+) as a cofactor.

Functionally, necessary for normal cell division and for the maintenance of normal septation. This Buchnera aphidicola subsp. Acyrthosiphon pisum (strain 5A) protein is Probable GTP-binding protein EngB.